A 393-amino-acid polypeptide reads, in one-letter code: NAD(P)H-quinone oxidoreductase subunit H, chloroplastic (393 aa).

Belongs to the complex I 49 kDa subunit family. NDH is composed of at least 16 different subunits, 5 of which are encoded in the nucleus.

Its subcellular location is the plastid. It is found in the chloroplast thylakoid membrane. The catalysed reaction is a plastoquinone + NADH + (n+1) H(+)(in) = a plastoquinol + NAD(+) + n H(+)(out). It catalyses the reaction a plastoquinone + NADPH + (n+1) H(+)(in) = a plastoquinol + NADP(+) + n H(+)(out). NDH shuttles electrons from NAD(P)H:plastoquinone, via FMN and iron-sulfur (Fe-S) centers, to quinones in the photosynthetic chain and possibly in a chloroplast respiratory chain. The immediate electron acceptor for the enzyme in this species is believed to be plastoquinone. Couples the redox reaction to proton translocation, and thus conserves the redox energy in a proton gradient. The sequence is that of NAD(P)H-quinone oxidoreductase subunit H, chloroplastic from Vitis vinifera (Grape).